The sequence spans 407 residues: Na(+)-translocating NADH-quinone reductase subunit F (407 aa).

The chain crosses the membrane as a helical span at residues I3–F23. One can recognise a 2Fe-2S ferredoxin-type domain in the interval G32 to I126. [2Fe-2S] cluster-binding residues include C69, C75, C78, and C110. One can recognise an FAD-binding FR-type domain in the interval V129–K269. A catalytic region spans residues D272–M389.

Belongs to the NqrF family. Composed of six subunits; NqrA, NqrB, NqrC, NqrD, NqrE and NqrF. The cofactor is [2Fe-2S] cluster. FAD serves as cofactor.

It localises to the cell inner membrane. It carries out the reaction a ubiquinone + n Na(+)(in) + NADH + H(+) = a ubiquinol + n Na(+)(out) + NAD(+). NQR complex catalyzes the reduction of ubiquinone-1 to ubiquinol by two successive reactions, coupled with the transport of Na(+) ions from the cytoplasm to the periplasm. The first step is catalyzed by NqrF, which accepts electrons from NADH and reduces ubiquinone-1 to ubisemiquinone by a one-electron transfer pathway. The chain is Na(+)-translocating NADH-quinone reductase subunit F from Vibrio vulnificus (strain CMCP6).